Consider the following 559-residue polypeptide: uncharacterized protein (559 aa).

Over residues 1-10 (MSGRRGDHPG) the composition is skewed to basic and acidic residues. Positions 1–76 (MSGRRGDHPG…ERSRVPPRTT (76 aa)) are disordered. A run of 11 helical transmembrane segments spans residues 128-148 (FAVD…AAAS), 155-175 (VALY…LIGP), 186-206 (VALA…IMNY), 208-228 (GATG…MMVF), 259-279 (VFGL…VEFV), 283-303 (LFQL…GASL), 358-378 (LWGN…PAFV), 387-407 (WVQL…NFAG), 428-448 (VLVT…ATAI), 490-510 (LAWV…WVGF), and 515-535 (ALLI…SLIP).

It to M.leprae ML2143.

It is found in the cell membrane. This is an uncharacterized protein from Mycobacterium tuberculosis (strain CDC 1551 / Oshkosh).